The following is a 562-amino-acid chain: Dihydroxy-acid dehydratase (562 aa).

Aspartate 80 serves as a coordination point for Mg(2+). Residue cysteine 121 coordinates [2Fe-2S] cluster. 2 residues coordinate Mg(2+): aspartate 122 and lysine 123. Lysine 123 is subject to N6-carboxylysine. A [2Fe-2S] cluster-binding site is contributed by cysteine 194. Glutamate 446 lines the Mg(2+) pocket. Serine 472 acts as the Proton acceptor in catalysis.

It belongs to the IlvD/Edd family. Homodimer. The cofactor is [2Fe-2S] cluster. It depends on Mg(2+) as a cofactor.

The catalysed reaction is (2R)-2,3-dihydroxy-3-methylbutanoate = 3-methyl-2-oxobutanoate + H2O. The enzyme catalyses (2R,3R)-2,3-dihydroxy-3-methylpentanoate = (S)-3-methyl-2-oxopentanoate + H2O. Its pathway is amino-acid biosynthesis; L-isoleucine biosynthesis; L-isoleucine from 2-oxobutanoate: step 3/4. It functions in the pathway amino-acid biosynthesis; L-valine biosynthesis; L-valine from pyruvate: step 3/4. In terms of biological role, functions in the biosynthesis of branched-chain amino acids. Catalyzes the dehydration of (2R,3R)-2,3-dihydroxy-3-methylpentanoate (2,3-dihydroxy-3-methylvalerate) into 2-oxo-3-methylpentanoate (2-oxo-3-methylvalerate) and of (2R)-2,3-dihydroxy-3-methylbutanoate (2,3-dihydroxyisovalerate) into 2-oxo-3-methylbutanoate (2-oxoisovalerate), the penultimate precursor to L-isoleucine and L-valine, respectively. In Staphylococcus epidermidis (strain ATCC 35984 / DSM 28319 / BCRC 17069 / CCUG 31568 / BM 3577 / RP62A), this protein is Dihydroxy-acid dehydratase.